A 633-amino-acid polypeptide reads, in one-letter code: Threonine--tRNA ligase (633 aa).

Residues 1 to 143 are editing domain; sequence MRALFLHSNR…SRTIKPKKVK (143 aa). Catalytic stretches follow at residues 220–515 and 221–515; these read NPLN…PVLP and PLND…PVLP. 3 residues coordinate Zn(2+): Cys-314, His-365, and His-488.

The protein belongs to the class-II aminoacyl-tRNA synthetase family. In terms of assembly, homodimer. Requires Zn(2+) as cofactor.

It is found in the cytoplasm. It carries out the reaction tRNA(Thr) + L-threonine + ATP = L-threonyl-tRNA(Thr) + AMP + diphosphate + H(+). In terms of biological role, catalyzes the attachment of threonine to tRNA(Thr) in a two-step reaction: L-threonine is first activated by ATP to form Thr-AMP and then transferred to the acceptor end of tRNA(Thr). Also edits incorrectly charged L-seryl-tRNA(Thr). The polypeptide is Threonine--tRNA ligase (Nanoarchaeum equitans (strain Kin4-M)).